Here is a 302-residue protein sequence, read N- to C-terminus: Acetylxylan esterase (302 aa).

The N-terminal stretch at 1–20 (MPSVKETLTLLLSQAFLATG) is a signal peptide. Positions 21-31 (SPVDGETVVKR) are excised as a propeptide. The residue at position 32 (glutamine 32) is a Pyrrolidone carboxylic acid. A glycan (N-linked (GlcNAc...) asparagine) is linked at asparagine 94. The active site involves serine 121. Residues 236–273 (QLSSGGSQPPGGGPTSTSRPTSTRTGSSPGPTQTHWGQ) form a disordered region. Residues 244–266 (PPGGGPTSTSRPTSTRTGSSPGP) form a linker region. Over residues 250–269 (TSTSRPTSTRTGSSPGPTQT) the composition is skewed to low complexity. One can recognise a CBM1 domain in the interval 266–302 (PTQTHWGQCGGQGWTGPTQCESGTTCQVISQWYSQCL). 2 cysteine pairs are disulfide-bonded: cysteine 274-cysteine 291 and cysteine 285-cysteine 301.

It belongs to the cutinase family. Acetylxylan esterase subfamily. Monomer. Glycosylated.

It is found in the secreted. The enzyme catalyses Deacetylation of xylans and xylo-oligosaccharides.. The protein operates within glycan degradation; xylan degradation. Its activity is regulated as follows. Inhibited by phenylmethylsulfonyl flouride. In terms of biological role, degrades acetylated xylans by cleaving acetyl side groups from the hetero-xylan backbone. This chain is Acetylxylan esterase (axe1), found in Hypocrea jecorina (Trichoderma reesei).